The following is a 362-amino-acid chain: Chorismate synthase (362 aa).

NADP(+) is bound by residues arginine 48 and arginine 54. FMN contacts are provided by residues arginine 125 to serine 127, asparagine 238 to alanine 239, glycine 286, lysine 301 to serine 305, and arginine 327.

Belongs to the chorismate synthase family. In terms of assembly, homotetramer. FMNH2 is required as a cofactor.

It catalyses the reaction 5-O-(1-carboxyvinyl)-3-phosphoshikimate = chorismate + phosphate. It functions in the pathway metabolic intermediate biosynthesis; chorismate biosynthesis; chorismate from D-erythrose 4-phosphate and phosphoenolpyruvate: step 7/7. In terms of biological role, catalyzes the anti-1,4-elimination of the C-3 phosphate and the C-6 proR hydrogen from 5-enolpyruvylshikimate-3-phosphate (EPSP) to yield chorismate, which is the branch point compound that serves as the starting substrate for the three terminal pathways of aromatic amino acid biosynthesis. This reaction introduces a second double bond into the aromatic ring system. This is Chorismate synthase from Granulibacter bethesdensis (strain ATCC BAA-1260 / CGDNIH1).